The following is a 386-amino-acid chain: MQLNRKQLKNLHNYKYSAIDNSLLSKYILKPYWWNQLLKVIPMSMAPNLITLIGLGFVVINILTMLVYKYHYEMDAFPSWVYASWAIGLFLYQSFDAIDGSQARRTGTSSPLGQLFDHGVDAINTSFEVLLTIELLQLDMFSSILTQFASLLYFYISTWEEYHTGTLYLSYFSGPVEGIVMVIGLFALTAIKGDSFWLKLHPTPESWGFVRSFLPYYTYGSCLYNFMAFALLLNVLQSLRNALQAVQKNNGSVIKALSGILPYFLQWMAVFSLYAKYPAFFEHHFLTIFCLNAFIFAYSVGVVIVSHITESPFPYWNVLILPFLVDAVDAYTFGVLKNVQTEYFFCYVGICIGVYGNFVAHVIAMITEEYGIKCLTIPSKPESKKN.

9 helical membrane-spanning segments follow: residues 48 to 68 (NLITLIGLGFVVINILTMLVY), 78 to 98 (PSWVYASWAIGLFLYQSFDAI), 136 to 156 (LQLDMFSSILTQFASLLYFYI), 171 to 191 (YFSGPVEGIVMVIGLFALTAI), 213 to 233 (FLPYYTYGSCLYNFMAFALLL), 253 to 273 (VIKALSGILPYFLQWMAVFSL), 285 to 305 (FLTIFCLNAFIFAYSVGVVIV), 316 to 336 (WNVLILPFLVDAVDAYTFGVL), and 344 to 364 (FFCYVGICIGVYGNFVAHVIA).

This sequence belongs to the CDP-alcohol phosphatidyltransferase class-I family.

Its subcellular location is the membrane. This is an uncharacterized protein from Schizosaccharomyces pombe (strain 972 / ATCC 24843) (Fission yeast).